The sequence spans 340 residues: Flap endonuclease 1 (340 aa).

The N-domain stretch occupies residues 1-98; sequence MGVPIGEIIP…KELEKRREAR (98 aa). Residues D27, D80, E152, E154, D173, D175, and D236 each coordinate Mg(2+). The interval 116 to 258 is I-domain; it reads EARKYAQRAT…KALEIVRHSK (143 aa). The interval 330–338 is interaction with PCNA; it reads KQSTLESWF.

This sequence belongs to the XPG/RAD2 endonuclease family. FEN1 subfamily. As to quaternary structure, interacts with PCNA. PCNA stimulates the nuclease activity without altering cleavage specificity. The cofactor is Mg(2+).

Functionally, structure-specific nuclease with 5'-flap endonuclease and 5'-3' exonuclease activities involved in DNA replication and repair. During DNA replication, cleaves the 5'-overhanging flap structure that is generated by displacement synthesis when DNA polymerase encounters the 5'-end of a downstream Okazaki fragment. Binds the unpaired 3'-DNA end and kinks the DNA to facilitate 5' cleavage specificity. Cleaves one nucleotide into the double-stranded DNA from the junction in flap DNA, leaving a nick for ligation. Also involved in the base excision repair (BER) pathway. Acts as a genome stabilization factor that prevents flaps from equilibrating into structures that lead to duplications and deletions. Also possesses 5'-3' exonuclease activity on nicked or gapped double-stranded DNA. The protein is Flap endonuclease 1 of Pyrococcus furiosus (strain ATCC 43587 / DSM 3638 / JCM 8422 / Vc1).